A 507-amino-acid polypeptide reads, in one-letter code: Cytochrome P450 52A7 (507 aa).

Residues 6 to 26 (LHYWYYVLPAFIIFHWIVSAI) form a helical membrane-spanning segment. Cys456 provides a ligand contact to heme.

It belongs to the cytochrome P450 family. Heme serves as cofactor.

The protein localises to the membrane. Together with an NADPH cytochrome P450 the enzyme system catalyzes the terminal hydroxylation as the first step in the assimilation of alkanes and fatty acids. Preferentially hydroxylates lauric acid. This is Cytochrome P450 52A7 (CYP52A7) from Candida tropicalis (Yeast).